The chain runs to 122 residues: Large ribosomal subunit protein uL14 (122 aa).

It belongs to the universal ribosomal protein uL14 family. Part of the 50S ribosomal subunit. Forms a cluster with proteins L3 and L19. In the 70S ribosome, L14 and L19 interact and together make contacts with the 16S rRNA in bridges B5 and B8.

Binds to 23S rRNA. Forms part of two intersubunit bridges in the 70S ribosome. The chain is Large ribosomal subunit protein uL14 from Thermosipho melanesiensis (strain DSM 12029 / CIP 104789 / BI429).